The sequence spans 493 residues: Na(+)/H(+) antiporter subunit D (493 aa).

A run of 15 helical transmembrane segments spans residues 3 to 23 (NFVI…IFMT), 31 to 51 (IFST…VQTV), 77 to 97 (FASL…LYSF), 107 to 127 (SFYY…FLTG), 129 to 149 (LFNM…LIVL), 163 to 183 (IVFN…LYAV), 203 to 223 (GLIT…GGIF), 227 to 247 (FWLP…FGAL), 251 to 271 (VGLY…TAFT), 274 to 294 (LMIW…LAYS), 299 to 319 (IVIY…AVHT), 330 to 350 (LIHD…LIAL), 370 to 390 (GWMF…SGFV), 407 to 427 (ISML…RIFI), and 449 to 469 (LYPA…TEWV).

Belongs to the CPA3 antiporters (TC 2.A.63) subunit D family. As to quaternary structure, forms a heterooligomeric complex that consists of seven subunits: MrpA, MrpB, MrpC, MrpD, MrpE, MrpF and MrpG.

It is found in the cell membrane. Functionally, mrp complex is a Na(+)/H(+) antiporter that is considered to be the major Na(+) excretion system in B.subtilis. Has a major role in Na(+) resistance and a minor role in Na(+)- and K(+)-dependent pH homeostasis as compared to TetB. MrpA may be the actual Na(+)/H(+) antiporter, although the six other Mrp proteins are all required for Na(+)/H(+) antiport activity and Na(+) resistance. MrpA is required for initiation of sporulation when external Na(+) concentration increases. Also transports Li(+) but not K(+), Ca(2+) or Mg(2+). The chain is Na(+)/H(+) antiporter subunit D (mrpD) from Bacillus subtilis (strain 168).